A 583-amino-acid chain; its full sequence is DNA ligase (583 aa).

An ATP-binding site is contributed by Glu-249. Lys-251 (N6-AMP-lysine intermediate) is an active-site residue. The ATP site is built by Arg-256, Arg-271, Glu-301, Phe-341, Arg-416, and Lys-422.

It belongs to the ATP-dependent DNA ligase family. It depends on Mg(2+) as a cofactor.

It catalyses the reaction ATP + (deoxyribonucleotide)n-3'-hydroxyl + 5'-phospho-(deoxyribonucleotide)m = (deoxyribonucleotide)n+m + AMP + diphosphate.. In terms of biological role, DNA ligase that seals nicks in double-stranded DNA during DNA replication, DNA recombination and DNA repair. The chain is DNA ligase from Pyrobaculum calidifontis (strain DSM 21063 / JCM 11548 / VA1).